The chain runs to 86 residues: uncharacterized protein (86 aa).

This is an uncharacterized protein from Archaeoglobus fulgidus (strain ATCC 49558 / DSM 4304 / JCM 9628 / NBRC 100126 / VC-16).